The primary structure comprises 164 residues: MEMTTTQRLILANQYKLMGLLDPANAKTYARSEAIVRGGFSLELKALDNEFNNLSVEECQTVLDTLEMYKALQVSYNNLTDKAEVTEHRLKFAGYCAVREKKYLNYLRFITGTEGKYQEFMHCEHGCDSQTPMWDKYTKMLDVWRNCPHGYHLSIQEIQKILNA.

This sequence belongs to the UPF0304 family.

The sequence is that of UPF0304 protein Asuc_0543 from Actinobacillus succinogenes (strain ATCC 55618 / DSM 22257 / CCUG 43843 / 130Z).